Consider the following 131-residue polypeptide: Small ribosomal subunit protein uS9 (131 aa).

It belongs to the universal ribosomal protein uS9 family.

This Actinobacillus pleuropneumoniae serotype 5b (strain L20) protein is Small ribosomal subunit protein uS9.